Reading from the N-terminus, the 118-residue chain is Large ribosomal subunit protein bL19 (118 aa).

The protein belongs to the bacterial ribosomal protein bL19 family.

Functionally, this protein is located at the 30S-50S ribosomal subunit interface and may play a role in the structure and function of the aminoacyl-tRNA binding site. The protein is Large ribosomal subunit protein bL19 of Metamycoplasma arthritidis (strain 158L3-1) (Mycoplasma arthritidis).